The sequence spans 1595 residues: DNA-directed RNA polymerase subunit beta'' (1595 aa).

Zn(2+)-binding residues include Cys-216, Cys-286, Cys-294, and Cys-297.

It belongs to the RNA polymerase beta' chain family. RpoC2 subfamily. In plastids the minimal PEP RNA polymerase catalytic core is composed of four subunits: alpha, beta, beta', and beta''. When a (nuclear-encoded) sigma factor is associated with the core the holoenzyme is formed, which can initiate transcription. The cofactor is Zn(2+).

Its subcellular location is the plastid. The protein localises to the chloroplast. It carries out the reaction RNA(n) + a ribonucleoside 5'-triphosphate = RNA(n+1) + diphosphate. Functionally, DNA-dependent RNA polymerase catalyzes the transcription of DNA into RNA using the four ribonucleoside triphosphates as substrates. This Bigelowiella natans (Pedinomonas minutissima) protein is DNA-directed RNA polymerase subunit beta''.